We begin with the raw amino-acid sequence, 62 residues long: Potassium channel toxin kappa-KTx 3.2 (62 aa).

The first 26 residues, 1 to 26, serve as a signal peptide directing secretion; sequence MKSTLMTASLLILVLLSIVDYASVYA. A propeptide spanning residues 27–36 is cleaved from the precursor; sequence ELIDSEISME. Disulfide bonds link C43-C61 and C47-C57.

It belongs to the short scorpion toxin superfamily. Potassium channel inhibitor kappa-KTx family. Kappa-KTx 3 subfamily. In terms of tissue distribution, expressed by the venom gland.

It is found in the secreted. In terms of biological role, potassium channel inhibitor (Kv). The protein is Potassium channel toxin kappa-KTx 3.2 of Heterometrus petersii (Asian forest scorpion).